A 410-amino-acid chain; its full sequence is Magnesium transporter NIPA3 (410 aa).

At 1 to 67 the chain is on the extracellular side; sequence MGAQVRLPPG…ISANVENKYS (67 aa). N-linked (GlcNAc...) asparagine glycosylation is found at Asn25, Asn35, Asn50, and Asn55. A helical membrane pass occupies residues 68 to 88; it reads LYVGLVLAVSSSIFIGSSFIL. The Cytoplasmic segment spans residues 89 to 114; that stretch reads KKKGLLQLASKGFTRAGQGGHSYLKE. Residues 115–135 form a helical membrane-spanning segment; sequence WLWWVGLLSMGAGEAANFAAY. A topological domain (extracellular) is located at residue Ala136. A helical transmembrane segment spans residues 137-157; that stretch reads FAPATLVTPLGALSVLISAIL. Over 158 to 165 the chain is Cytoplasmic; that stretch reads SSYFLNEH. The helical transmembrane segment at 166–186 threads the bilayer; sequence LNIHGKIGCILSILGSTVMVI. Topologically, residues 187-207 are extracellular; that stretch reads HAPQEEEVTSLHEMEMKLRDP. Residues 208-228 traverse the membrane as a helical segment; sequence GFISFAVIITVISLVLILIVA. At 229–233 the chain is on the cytoplasmic side; the sequence is PKKGQ. Residues 234 to 254 traverse the membrane as a helical segment; that stretch reads TNILVYISICSLIGAFSVSSV. Over 255 to 273 the chain is Extracellular; sequence KGLGIAIKELIEWKPVYKH. Residues 274–294 form a helical membrane-spanning segment; it reads PLVFVLLAVLVLSVTTQINYL. The Cytoplasmic portion of the chain corresponds to 295–305; that stretch reads NKALDTFNTSL. The helical transmembrane segment at 306 to 326 threads the bilayer; the sequence is VTPIYYVFFTSMVVTCSAILF. Residues 327 to 336 are Extracellular-facing; sequence QEWYGMTAGD. The chain crosses the membrane as a helical span at residues 337 to 357; sequence IIGTLSGFFTIIIGIFLLHAF. Topologically, residues 358–410 are cytoplasmic; it reads KNTDITWSELTSTAKKEAVSLNVNENNYVLLENLECSAPGYNDDVTLFSRTDD.

It belongs to the NIPA family. As to expression, expressed in the pancreatic islets.

Its subcellular location is the golgi apparatus membrane. It carries out the reaction Mg(2+)(in) = Mg(2+)(out). Acts as a Mg(2+) transporter. Can also transport other divalent cations such as Fe(2+), Sr(2+), Ba(2+), Mn(2+), Cu(2+) and Co(2+) but to a much less extent than Mg(2+). The chain is Magnesium transporter NIPA3 (NIPAL1) from Homo sapiens (Human).